The following is a 91-amino-acid chain: C-C motif chemokine 5 (91 aa).

A signal peptide spans methionine 1–alanine 23. 2 cysteine pairs are disulfide-bonded: cysteine 33–cysteine 57 and cysteine 34–cysteine 73.

This sequence belongs to the intercrine beta (chemokine CC) family.

It localises to the secreted. Its function is as follows. Chemoattractant for blood monocytes, memory T-helper cells and eosinophils. Causes the release of histamine from basophils and activates eosinophils. May activate several chemokine receptors including CCR1, CCR3, CCR4 and CCR5. May also be an agonist of the G protein-coupled receptor GPR75. Together with GPR75, may play a role in neuron survival through activation of a downstream signaling pathway involving the PI3, Akt and MAP kinases. By activating GPR75 may also play a role in insulin secretion by islet cells. The sequence is that of C-C motif chemokine 5 (CCL5) from Sigmodon hispidus (Hispid cotton rat).